A 197-amino-acid polypeptide reads, in one-letter code: Holliday junction branch migration complex subunit RuvA (197 aa).

The domain I stretch occupies residues 1 to 64 (MIARLAGKVA…QDAIELYGFA (64 aa)). Residues 65–141 (SEDEEAVFRA…LALLARAAGP (77 aa)) form a domain II region. The tract at residues 141-145 (PARAK) is flexible linker. Residues 146-197 (PGAGVVEQLRQALVNLGYKPPQADAAADALRDEAEGKKLDELLREALKRLRG) are domain III.

This sequence belongs to the RuvA family. In terms of assembly, homotetramer. Forms an RuvA(8)-RuvB(12)-Holliday junction (HJ) complex. HJ DNA is sandwiched between 2 RuvA tetramers; dsDNA enters through RuvA and exits via RuvB. An RuvB hexamer assembles on each DNA strand where it exits the tetramer. Each RuvB hexamer is contacted by two RuvA subunits (via domain III) on 2 adjacent RuvB subunits; this complex drives branch migration. In the full resolvosome a probable DNA-RuvA(4)-RuvB(12)-RuvC(2) complex forms which resolves the HJ.

Its subcellular location is the cytoplasm. Its function is as follows. The RuvA-RuvB-RuvC complex processes Holliday junction (HJ) DNA during genetic recombination and DNA repair, while the RuvA-RuvB complex plays an important role in the rescue of blocked DNA replication forks via replication fork reversal (RFR). RuvA specifically binds to HJ cruciform DNA, conferring on it an open structure. The RuvB hexamer acts as an ATP-dependent pump, pulling dsDNA into and through the RuvAB complex. HJ branch migration allows RuvC to scan DNA until it finds its consensus sequence, where it cleaves and resolves the cruciform DNA. The chain is Holliday junction branch migration complex subunit RuvA from Anaeromyxobacter sp. (strain Fw109-5).